Reading from the N-terminus, the 953-residue chain is Coatomer subunit beta (953 aa).

An N-acetylthreonine modification is found at Thr2. HEAT repeat units lie at residues 96-131 (HEMI…KEAE), 132-168 (LLEP…NFEN), 240-276 (SERA…SAPT), 277-314 (AIKA…HPAH), 316-353 (RVLQ…SRNV), and 396-433 (DMAA…RFDN). Lys494 is subject to N6-acetyllysine.

As to quaternary structure, oligomeric complex that consists of at least the alpha, beta, beta', gamma, delta, epsilon and zeta subunits. Interacts with SCYL1. Interacts with CAPN8. Interacts with COPG1. Interacts with ARF1 (myristoylated); this interaction is required for binding of COPB1 to Golgi membranes. Interacts (via trunk domain) with ARF1 (via switch I region); the interaction is direct. Interacts with KCNK2 (via N-terminus); this interaction increases the channel-mediated whole cell currents and promotes plasma membrane expression of KCNK2. Interacts with PRKCE. Interacts with STX17. Interacts with TMEM115. Interacts with TMEM41B. Post-translationally, proteolytically cleaved between Ser-528 and Ser-529 by CAPN8.

Its subcellular location is the cytoplasm. It localises to the golgi apparatus membrane. The protein localises to the cytoplasmic vesicle. It is found in the COPI-coated vesicle membrane. The protein resides in the cell membrane. Its subcellular location is the endoplasmic reticulum-Golgi intermediate compartment. It localises to the microsome membrane. In terms of biological role, the coatomer is a cytosolic protein complex that binds to dilysine motifs and reversibly associates with Golgi non-clathrin-coated vesicles, which further mediate biosynthetic protein transport from the ER, via the Golgi up to the trans Golgi network. Coatomer complex is required for budding from Golgi membranes, and is essential for the retrograde Golgi-to-ER transport of dilysine-tagged proteins. In mammals, the coatomer can only be recruited by membranes associated to ADP-ribosylation factors (ARFs), which are small GTP-binding proteins; the complex also influences the Golgi structural integrity, as well as the processing, activity, and endocytic recycling of LDL receptors. Involved in the Golgi disassembly and reassembly processes during cell cycle. Involved in autophagy by playing a role in early endosome function. Plays a role in organellar compartmentalization of secretory compartments including endoplasmic reticulum (ER)-Golgi intermediate compartment (ERGIC), Golgi, trans-Golgi network (TGN) and recycling endosomes, and in biosynthetic transport of CAV1. Plays a functional role in facilitating the transport of kappa-type opioid receptor mRNAs into axons and enhances translation of these proteins in the axonal compartment of dorsal root ganglion (DRG) cells. Required for limiting lipid storage in lipid droplets. Involved in lipid homeostasis by regulating the presence of perilipin family members PLIN2 and PLIN3 at the lipid droplet surface and promoting the association of adipocyte triglyceride lipase (PNPLA2) with the lipid droplet surface to mediate lipolysis. The polypeptide is Coatomer subunit beta (Copb1) (Rattus norvegicus (Rat)).